The following is a 161-amino-acid chain: Troponin C, slow skeletal and cardiac muscles (161 aa).

An N-acetylmethionine modification is found at methionine 1. EF-hand domains are found at residues 16–51 (QKNEFKAAFDIFVLGAEDGCISTKELGKVMRMLGQN), 52–87 (PTPEELQEMIDEVDEDGSGTVDFDEFLVMMVRCMKD), 92–127 (KSEEELSDLFRMFDKNADGYIDLDELKIMLQATGET), and 128–161 (ITEDDIEELMKDGDKNNDGRIDYDEFLEFMKGVE). The Ca(2+) site is built by aspartate 65, aspartate 67, serine 69, threonine 71, and glutamate 76. Serine 98 carries the post-translational modification Phosphoserine. The Ca(2+) site is built by aspartate 105, asparagine 107, aspartate 109, tyrosine 111, glutamate 116, aspartate 141, asparagine 143, aspartate 145, arginine 147, and glutamate 152.

The protein belongs to the troponin C family.

In terms of biological role, troponin is the central regulatory protein of striated muscle contraction. Tn consists of three components: Tn-I which is the inhibitor of actomyosin ATPase, Tn-T which contains the binding site for tropomyosin and Tn-C. The binding of calcium to Tn-C abolishes the inhibitory action of Tn on actin filaments. The protein is Troponin C, slow skeletal and cardiac muscles (TNNC1) of Homo sapiens (Human).